Consider the following 47-residue polypeptide: Large ribosomal subunit protein bL34 (47 aa).

Belongs to the bacterial ribosomal protein bL34 family.

The polypeptide is Large ribosomal subunit protein bL34 (rpmH) (Mycobacterium leprae (strain TN)).